Consider the following 447-residue polypeptide: Probable alpha-galactosidase B (447 aa).

The N-terminal stretch at 1 to 22 (MTTFLSLTTAAAVLTLARGSNA) is a signal peptide. Cystine bridges form between cysteine 45/cysteine 77 and cysteine 127/cysteine 157. Aspartate 155 serves as the catalytic Nucleophile. N-linked (GlcNAc...) asparagine glycans are attached at residues asparagine 162 and asparagine 180. Position 225-229 (225-229 (NWGQA)) interacts with substrate. A glycan (N-linked (GlcNAc...) asparagine) is linked at asparagine 236. Residue aspartate 247 is the Proton donor of the active site. Asparagine 286 carries an N-linked (GlcNAc...) asparagine glycan.

This sequence belongs to the glycosyl hydrolase 27 family.

It is found in the secreted. The catalysed reaction is Hydrolysis of terminal, non-reducing alpha-D-galactose residues in alpha-D-galactosides, including galactose oligosaccharides, galactomannans and galactolipids.. In terms of biological role, hydrolyzes a variety of simple alpha-D-galactoside as well as more complex molecules such as oligosaccharides and polysaccharides. The protein is Probable alpha-galactosidase B (aglB) of Neosartorya fischeri (strain ATCC 1020 / DSM 3700 / CBS 544.65 / FGSC A1164 / JCM 1740 / NRRL 181 / WB 181) (Aspergillus fischerianus).